A 78-amino-acid chain; its full sequence is Defensin-like protein (78 aa).

The first 31 residues, 1–31 (MGRSIRLFATFFLIAMLFLSTEMGPMTSAEA), serve as a signal peptide directing secretion. 4 disulfides stabilise this stretch: Cys34-Cys78, Cys45-Cys65, Cys51-Cys72, and Cys55-Cys74.

It belongs to the DEFL family. In terms of tissue distribution, predominantly expressed in the pistil during all stages of flower development.

The protein localises to the secreted. Its function is as follows. May be involved in the defense of the pistil against pathogen infection. This is Defensin-like protein from Petunia integrifolia (Violet-flowered petunia).